The sequence spans 290 residues: Shikimate dehydrogenase (NADP(+)) (290 aa).

Residues 24–26 (SKS) and Thr71 each bind shikimate. Residue Lys75 is the Proton acceptor of the active site. Shikimate is bound by residues Asn96 and Asp111. Residues 135–139 (GAGGA), 159–164 (NRTKQR), and Ile228 contribute to the NADP(+) site. Shikimate is bound at residue Tyr230. Gly251 contributes to the NADP(+) binding site.

The protein belongs to the shikimate dehydrogenase family. Homodimer.

The enzyme catalyses shikimate + NADP(+) = 3-dehydroshikimate + NADPH + H(+). It functions in the pathway metabolic intermediate biosynthesis; chorismate biosynthesis; chorismate from D-erythrose 4-phosphate and phosphoenolpyruvate: step 4/7. Involved in the biosynthesis of the chorismate, which leads to the biosynthesis of aromatic amino acids. Catalyzes the reversible NADPH linked reduction of 3-dehydroshikimate (DHSA) to yield shikimate (SA). This is Shikimate dehydrogenase (NADP(+)) from Bartonella tribocorum (strain CIP 105476 / IBS 506).